The chain runs to 366 residues: Dihydroorotate dehydrogenase (quinone) (366 aa).

Residues 74-78 and Thr98 each bind FMN; that span reads AGFDK. Residue Lys78 participates in substrate binding. 123-127 serves as a coordination point for substrate; that stretch reads NRMGF. FMN contacts are provided by Asn156 and Asn189. Asn189 is a binding site for substrate. Ser192 functions as the Nucleophile in the catalytic mechanism. A substrate-binding site is contributed by Asn194. The FMN site is built by Lys231 and Thr259. 260-261 contributes to the substrate binding site; it reads NT. FMN is bound by residues Gly285, Gly314, and 335–336; that span reads YT.

Belongs to the dihydroorotate dehydrogenase family. Type 2 subfamily. Monomer. It depends on FMN as a cofactor.

The protein resides in the cell membrane. It catalyses the reaction (S)-dihydroorotate + a quinone = orotate + a quinol. It participates in pyrimidine metabolism; UMP biosynthesis via de novo pathway; orotate from (S)-dihydroorotate (quinone route): step 1/1. Functionally, catalyzes the conversion of dihydroorotate to orotate with quinone as electron acceptor. This chain is Dihydroorotate dehydrogenase (quinone), found in Kineococcus radiotolerans (strain ATCC BAA-149 / DSM 14245 / SRS30216).